The primary structure comprises 118 residues: D-dopachrome decarboxylase (118 aa).

The residue at position 2 (P2) is an N-acetylproline.

It belongs to the MIF family. Homotrimer.

The protein localises to the cytoplasm. It carries out the reaction D-dopachrome + H(+) = 5,6-dihydroxyindole + CO2. Functionally, tautomerization of D-dopachrome with decarboxylation to give 5,6-dihydroxyindole (DHI). The protein is D-dopachrome decarboxylase (ddt) of Xenopus tropicalis (Western clawed frog).